The primary structure comprises 203 residues: Small ribosomal subunit protein uS5 (203 aa).

One can recognise an S5 DRBM domain in the interval 49–112 (FEERVVKIKR…KNANNNLIKV (64 aa)).

It belongs to the universal ribosomal protein uS5 family. Part of the 30S ribosomal subunit. Contacts proteins S4 and S8.

Functionally, with S4 and S12 plays an important role in translational accuracy. Located at the back of the 30S subunit body where it stabilizes the conformation of the head with respect to the body. The protein is Small ribosomal subunit protein uS5 of Ureaplasma parvum serovar 3 (strain ATCC 700970).